The following is a 290-amino-acid chain: Probable porphobilinogen deaminase (290 aa).

C230 carries the post-translational modification S-(dipyrrolylmethanemethyl)cysteine.

This sequence belongs to the HMBS family. It depends on dipyrromethane as a cofactor.

The catalysed reaction is 4 porphobilinogen + H2O = hydroxymethylbilane + 4 NH4(+). Its pathway is porphyrin-containing compound metabolism; protoporphyrin-IX biosynthesis; coproporphyrinogen-III from 5-aminolevulinate: step 2/4. Tetrapolymerization of the monopyrrole PBG into the hydroxymethylbilane pre-uroporphyrinogen in several discrete steps. This is Probable porphobilinogen deaminase from Metallosphaera sedula (strain ATCC 51363 / DSM 5348 / JCM 9185 / NBRC 15509 / TH2).